Reading from the N-terminus, the 209-residue chain is Uracil phosphoribosyltransferase (209 aa).

5-phospho-alpha-D-ribose 1-diphosphate-binding positions include Arg-79, Arg-104, and 131 to 139 (DPMLATGGS). Residues Ile-194 and 199–201 (GDA) each bind uracil. Asp-200 is a binding site for 5-phospho-alpha-D-ribose 1-diphosphate.

This sequence belongs to the UPRTase family. Requires Mg(2+) as cofactor.

It catalyses the reaction UMP + diphosphate = 5-phospho-alpha-D-ribose 1-diphosphate + uracil. The protein operates within pyrimidine metabolism; UMP biosynthesis via salvage pathway; UMP from uracil: step 1/1. Its activity is regulated as follows. Allosterically activated by GTP. Its function is as follows. Catalyzes the conversion of uracil and 5-phospho-alpha-D-ribose 1-diphosphate (PRPP) to UMP and diphosphate. The sequence is that of Uracil phosphoribosyltransferase from Lacticaseibacillus paracasei (strain ATCC 334 / BCRC 17002 / CCUG 31169 / CIP 107868 / KCTC 3260 / NRRL B-441) (Lactobacillus paracasei).